The primary structure comprises 212 residues: 2-phospho-L-lactate guanylyltransferase (212 aa).

The protein belongs to the CofC family. In terms of assembly, homodimer.

The enzyme catalyses (2S)-2-phospholactate + GTP + H(+) = (2S)-lactyl-2-diphospho-5'-guanosine + diphosphate. It participates in cofactor biosynthesis; coenzyme F420 biosynthesis. Its function is as follows. Guanylyltransferase that catalyzes the activation of (2S)-2-phospholactate (2-PL) as (2S)-lactyl-2-diphospho-5'-guanosine, via the condensation of 2-PL with GTP. It is involved in the biosynthesis of coenzyme F420, a hydride carrier cofactor. This is 2-phospho-L-lactate guanylyltransferase from Methanocorpusculum labreanum (strain ATCC 43576 / DSM 4855 / Z).